The following is a 352-amino-acid chain: Thymidine kinase (352 aa).

Residue 32 to 39 (GVYGIGKS) participates in ATP binding. Glu-60 functions as the Proton acceptor in the catalytic mechanism. Substrate contacts are provided by Tyr-78, Gln-102, Phe-105, and Phe-148. Residue Arg-192 participates in ATP binding. Arg-198 serves as a coordination point for substrate.

The protein belongs to the herpesviridae thymidine kinase family. In terms of assembly, homodimer.

The catalysed reaction is thymidine + ATP = dTMP + ADP + H(+). Functionally, catalyzes the transfer of the gamma-phospho group of ATP to thymidine to generate dTMP in the salvage pathway of pyrimidine synthesis. The dTMP serves as a substrate for DNA polymerase during viral DNA replication. Allows the virus to be reactivated and to grow in non-proliferative cells lacking a high concentration of phosphorylated nucleic acid precursors. This is Thymidine kinase from Equine herpesvirus 4 (strain 1942) (EHV-4).